A 417-amino-acid polypeptide reads, in one-letter code: Phosphoglycerate kinase (417 aa).

14 residues coordinate (2R)-3-phosphoglycerate: V23, D24, F25, N26, Q38, R39, S62, H63, G65, R66, L122, R123, H170, and R171. G214 contacts ADP. Residue G214 coordinates CDP. The AMP site is built by A215 and K216. Position 215 (A215) interacts with ATP. A215 is a binding site for Mg(2+). Position 219 (D219) interacts with CDP. D219 serves as a coordination point for Mg(2+). AMP is bound at residue K220. K220 is an ATP binding site. G238 contributes to the ADP binding site. G238 serves as a coordination point for CDP. Residues G239 and G313 each coordinate AMP. The ATP site is built by G239 and G313. Residues G338, V340, and F343 each coordinate CDP. F343 lines the ADP pocket. E344 is an AMP binding site. Positions 344, 375, and 376 each coordinate ATP. Residue D375 participates in Mg(2+) binding.

Belongs to the phosphoglycerate kinase family. Monomer. Mg(2+) is required as a cofactor.

It is found in the cytoplasm. The catalysed reaction is (2R)-3-phosphoglycerate + ATP = (2R)-3-phospho-glyceroyl phosphate + ADP. The protein operates within carbohydrate degradation; glycolysis; pyruvate from D-glyceraldehyde 3-phosphate: step 2/5. Catalyzes one of the two ATP producing reactions in the glycolytic pathway via the reversible conversion of 1,3-diphosphoglycerate to 3-phosphoglycerate. In addition to its role as a glycolytic enzyme, it seems that PGK-1 acts as a polymerase alpha cofactor protein (primer recognition protein). May play a role in sperm motility. The protein is Phosphoglycerate kinase (PGK) of Gallus gallus (Chicken).